A 365-amino-acid chain; its full sequence is Quinolone epoxide rearrangement protein asqO (365 aa).

It belongs to the quinolone epoxide rearrangement protein penF family.

The enzyme catalyses (1'E,3'E)-5-(3,3-dimethyloxiran-2-yl)-3-methylhexa-1,3-dienyl-quinolinone B = aspoquinolone A. The catalysed reaction is (1'E,3'E)-5-(3,3-dimethyloxiran-2-yl)-3-methylhexa-1,3-dienyl-quinolinone B = aspoquinolone B. The protein operates within secondary metabolite biosynthesis. It participates in alkaloid biosynthesis. It functions in the pathway mycotoxin biosynthesis. Quinolone epoxide rearrangement protein; part of the gene cluster that mediates the biosynthesis of the aspoquinolone mycotoxins. Within the pathway, asqO catalyzes an enzymatic 3-exo-tet cyclization to yield the cyclopropyl-THF ring system in aspoquinolone. The first step of the pathway is catalyzed by the nonribosomal peptide synthetase asqK that condenses anthranilic acid and O-methyl-L-tyrosine to produce 4'-methoxycyclopeptin. 4'-methoxycyclopeptin is then converted to 4'-methoxydehydrocyclopeptin by the ketoglutarate-dependent dioxygenase asqJ. AsqJ also converts its first product 4'-methoxydehydrocyclopeptin to 4'-methoxycyclopenin. The following conversion of 4'-methoxycyclopenin into 4'-methoxyviridicatin is catalyzed by the cyclopenase asqI. 4'-methoxyviridicatin is the precursor of quinolone natural products, and is further converted to quinolinone B. The prenyltransferase asqH1 then catalyzes the canonical Friedel-Crafts alkylation of quinolinone B with dimethylallyl cation to yield dimethylallyl quinolone, which is subjected to FAD-dependent dehydrogenation by the FAD-linked oxidoreductase asqF to yield conjugated aryl diene. The delta(3') double bond then serves as the site of the second alkylation with DMAPP catalyzed by the prenyltransferase asqH2 to yield a carbenium ion intermediate, which can be attacked by H(2)O to yield a styrenyl quinolone containing a C3'-hydroxyprenyl chain. The FAD-dependent monooxygenase asqG performs epoxidation of the terminal C7'-C8' olefin. Finally, after dehydratation of the epoxide at C3 by asqC, the quinolone epoxide rearrangement protein asqO catalyzes an enzymatic 3-exo-tet cyclization to yield the cyclopropyl-THF ring system in aspoquinolone. The chain is Quinolone epoxide rearrangement protein asqO from Emericella nidulans (strain FGSC A4 / ATCC 38163 / CBS 112.46 / NRRL 194 / M139) (Aspergillus nidulans).